A 161-amino-acid polypeptide reads, in one-letter code: Cyclic pyranopterin monophosphate synthase (161 aa).

Residues 75-77 and 113-114 each bind substrate; these read LCH and ME. The active site involves Asp-128.

The protein belongs to the MoaC family. In terms of assembly, homohexamer; trimer of dimers.

It carries out the reaction (8S)-3',8-cyclo-7,8-dihydroguanosine 5'-triphosphate = cyclic pyranopterin phosphate + diphosphate. It functions in the pathway cofactor biosynthesis; molybdopterin biosynthesis. Functionally, catalyzes the conversion of (8S)-3',8-cyclo-7,8-dihydroguanosine 5'-triphosphate to cyclic pyranopterin monophosphate (cPMP). The sequence is that of Cyclic pyranopterin monophosphate synthase from Escherichia coli O139:H28 (strain E24377A / ETEC).